A 378-amino-acid chain; its full sequence is 3-hydroxyisobutyryl-CoA hydrolase 1 (378 aa).

Residue Ala-2 is modified to N-acetylalanine. Substrate-binding residues include Glu-94, Gly-119, Glu-142, and Asp-150.

Belongs to the enoyl-CoA hydratase/isomerase family. Expressed in roots, leaves, flowers and siliques.

It is found in the peroxisome. The catalysed reaction is 3-hydroxy-2-methylpropanoyl-CoA + H2O = 3-hydroxy-2-methylpropanoate + CoA + H(+). Its pathway is amino-acid degradation; L-valine degradation. Inhibited by copper. Its function is as follows. Involved in valine catabolism. May be indirectly involved in benzoic acid biosynthesis and in cold signaling and cold tolerance. This Arabidopsis thaliana (Mouse-ear cress) protein is 3-hydroxyisobutyryl-CoA hydrolase 1 (CHY1).